The primary structure comprises 83 residues: Mu-theraphotoxin-Hhn2b 1 (83 aa).

An N-terminal signal peptide occupies residues 1 to 21 (MKASMFLALAGLVLLFVVCYA). A propeptide spanning residues 22-48 (SESEEKEFPRELISKIFAVDDFKGEER) is cleaved from the precursor. Disulfide bonds link Cys50–Cys65, Cys57–Cys70, and Cys64–Cys77. Leu81 is subject to Leucine amide.

Belongs to the neurotoxin 10 (Hwtx-1) family. 14 (Hntx-1) subfamily. Monomer. Expressed by the venom gland.

The protein resides in the secreted. In terms of biological role, weakly blocks the rat SCN2A/SCN1B (Nav1.2/beta-1) sodium channel (IC(50)=68 uM) and the insect sodium channel para/tipE (IC(50)=4.3 uM), without altering the activation or inactivation kinetics (depressant toxin). In Cyriopagopus hainanus (Chinese bird spider), this protein is Mu-theraphotoxin-Hhn2b 1.